The chain runs to 196 residues: Peroxiredoxin TSA1-B (196 aa).

The region spanning 3-161 (PVVQQPAPSF…SLRLLEAFQF (159 aa)) is the Thioredoxin domain. Substrate is bound at residue 45-47 (TFV). Cys48 (cysteine sulfenic acid (-SOH) intermediate) is an active-site residue. A substrate-binding site is contributed by Arg124. The disordered stretch occupies residues 173 to 196 (WHPGDETIKPSPEASKEYFNKVNK). Residues 175-196 (PGDETIKPSPEASKEYFNKVNK) are compositionally biased toward basic and acidic residues.

The protein belongs to the peroxiredoxin family. AhpC/Prx1 subfamily. Homodimer; disulfide-linked, upon oxidation.

The protein resides in the cell surface. The protein localises to the nucleus. Its subcellular location is the cytoplasm. The catalysed reaction is a hydroperoxide + [thioredoxin]-dithiol = an alcohol + [thioredoxin]-disulfide + H2O. In terms of biological role, thiol-specific peroxidase that catalyzes the reduction of hydrogen peroxide and organic hydroperoxides to water and alcohols, respectively. Plays a role in cell protection against oxidative stress by detoxifying peroxides and as sensor of hydrogen peroxide-mediated signaling events. Also involved in the correct composition of the hyphal cell wall. This is Peroxiredoxin TSA1-B from Candida albicans (strain SC5314 / ATCC MYA-2876) (Yeast).